The primary structure comprises 1078 residues: Nonribosomal peptide synthetase aneB (1078 aa).

The adenylation stretch occupies residues 20–417 (FQQNVLDRPD…HGRKDTQVKI (398 aa)). In terms of domain architecture, Carrier spans 559 to 635 (MPTTPLERQM…TLCQHVSVRP (77 aa)). An O-(pantetheine 4'-phosphoryl)serine modification is found at Ser596. Positions 699 to 1013 (NYTLRLDVKL…HEMGYYGPVT (315 aa)) are condensation.

It belongs to the NRP synthetase family.

It carries out the reaction holo-[peptidyl-carrier protein] + L-proline + ATP = L-prolyl-[peptidyl-carrier protein] + AMP + diphosphate. Its pathway is secondary metabolite biosynthesis. Nonribosomal peptide synthetase; part of the gene cluster that mediates the biosynthesis of aculenes, a unique type of norsesquiterpenes that contain a nordaucane skeleton linked to an L-proline moiety and are of mixed biosynthetic origin. The pathway begins with the synthesis of dauca-4,7-diene by the terpene cyclase aneC using farnesyl pyrophosphate (FPP) as substrate. The cytochrome P450 monooxygenase aneF then performs the initial oxidation at C-12 of dauca-4,7-diene to yield asperaculane D. Asperaculane D is substrate of the cytochrome P450 monooxygenase aneD for C-10 hydroxylation to yield asperaculane E. The cytochrome P450 monooxygenase aneG then converts asperaculane E into aculene D via C-2 oxidation. The monomodular nonribosomal peptide synthase aneB adenylates L-proline and the thiohydrolase aneE transfers this activated L-proline derivative to aculenes D and C to produce respectively aculenes B and A. The dioxygenase aneA converts aculene D into aculene C, and aculene B into aculene A by introducing the 5,6-alkene moiety. Asperculanes A, B, C and F, as well as 14-prolyl asperculane C, might be shunt products of the pathway. The protein is Nonribosomal peptide synthetase aneB of Aspergillus aculeatus (strain ATCC 16872 / CBS 172.66 / WB 5094).